The sequence spans 226 residues: Isoprenyl transferase (226 aa).

The active site involves aspartate 12. Position 12 (aspartate 12) interacts with Mg(2+). Substrate-binding positions include 13–16 (GNAR), tryptophan 17, lysine 25, histidine 29, and 57–59 (SSE). Asparagine 60 acts as the Proton acceptor in catalysis. Substrate contacts are provided by residues tryptophan 61, arginine 63, arginine 174, and 180 to 182 (RIS). Residue glutamate 193 participates in Mg(2+) binding.

It belongs to the UPP synthase family. As to quaternary structure, homodimer. Requires Mg(2+) as cofactor.

Its function is as follows. Catalyzes the condensation of isopentenyl diphosphate (IPP) with allylic pyrophosphates generating different type of terpenoids. The protein is Isoprenyl transferase of Rickettsia sibirica (strain ATCC VR-151 / 246).